Consider the following 474-residue polypeptide: MPGTALSPLLLLLLLSWASRNEAAPDQDEIDCLPGLAKQPSFRQYSGYLRASDSKHFHYWFVESQNDPKNSPVVLWLNGGPGCSSLDGLLTEHGPFLIQPDGVTLEYNPYAWNLIANVLYIESPAGVGFSYSDDKMYVTNDTEVAENNYEALKDFFRLFPEYKDNKLFLTGESYAGIYIPTLAVLVMQDPSMNLQGLAVGNGLASYEQNDNSLVYFAYYHGLLGNRLWTSLQTHCCAQNKCNFYDNKDPECVNNLLEVSRIVGKSGLNIYNLYAPCAGGVPGRHRYEDTLVVQDFGNIFTRLPLKRRFPEALMRSGDKVRLDPPCTNTTAPSNYLNNPYVRKALHIPESLPRWDMCNFLVNLQYRRLYQSMNSQYLKLLSSQKYQILLYNGDVDMACNFMGDEWFVDSLNQKMEVQRRPWLVDYGESGEQVAGFVKECSHITFLTIKGAGHMVPTDKPRAAFTMFSRFLNKEPY.

Residues 1 to 23 form the signal peptide; the sequence is MPGTALSPLLLLLLLSWASRNEA. Disulfide bonds link C83–C356, C235–C251, C236–C241, and C276–C325. The N-linked (GlcNAc...) (high mannose) asparagine glycan is linked to N140. Residue S173 is part of the active site. An N-linked (GlcNAc...) (high mannose) asparagine glycan is attached at N327. Residues D394 and H451 contribute to the active site.

It belongs to the peptidase S10 family. In terms of assembly, heterodimer of a 32 kDa chain and a 20 kDa chain; disulfide-linked.

The protein localises to the lysosome. It carries out the reaction Release of a C-terminal amino acid with broad specificity.. In terms of biological role, protective protein appears to be essential for both the activity of beta-galactosidase and neuraminidase, it associates with these enzymes and exerts a protective function necessary for their stability and activity. This protein is also a carboxypeptidase and can deamidate tachykinins. This Mus musculus (Mouse) protein is Lysosomal protective protein (Ctsa).